Consider the following 223-residue polypeptide: Glutathione-specific gamma-glutamylcyclotransferase 1 (223 aa).

The tract at residues 1 to 26 (MKQESASQSTPPPSLSPAPSSAQPSW) is disordered. Residue 36-41 (IFGYGS) participates in substrate binding. The active-site Proton acceptor is the Glu116.

It belongs to the gamma-glutamylcyclotransferase family. ChaC subfamily. As to quaternary structure, interacts with NOTCH1 (via extracellular region). Widely expressed, with high expression in forebrain and anterior spinal cord. Expressed at intermediate level in the dorsal aorta and heart. Present throughout adult brain (at protein level).

Its subcellular location is the cytoplasm. It localises to the cytosol. It is found in the golgi apparatus. The protein resides in the trans-Golgi network. It catalyses the reaction glutathione = L-cysteinylglycine + 5-oxo-L-proline. In terms of biological role, catalyzes the cleavage of glutathione into 5-oxo-L-proline and a Cys-Gly dipeptide. Acts specifically on glutathione, but not on other gamma-glutamyl peptides. Glutathione depletion is an important factor for apoptosis initiation and execution. Acts as a pro-apoptotic component of the unfolded protein response pathway by mediating the pro-apoptotic effects of the ATF4-ATF3-DDIT3/CHOP cascade. Negative regulator of Notch signaling pathway involved in embryonic neurogenesis: acts by inhibiting Notch cleavage by furin, maintaining Notch in an immature inactive form, thereby promoting neurogenesis in embryos. The chain is Glutathione-specific gamma-glutamylcyclotransferase 1 from Mus musculus (Mouse).